The primary structure comprises 85 residues: Large ribosomal subunit protein bL27 (85 aa).

A disordered region spans residues 1–23; the sequence is MAHKKAGGSSRNGRDSESKRLGV.

The protein belongs to the bacterial ribosomal protein bL27 family.

This chain is Large ribosomal subunit protein bL27, found in Nitrosococcus oceani (strain ATCC 19707 / BCRC 17464 / JCM 30415 / NCIMB 11848 / C-107).